The sequence spans 142 residues: MLNIDEIKKLIPHRYPFLLVDKITELEVGKRAVGIKNVTVNEPFFQGHFPEYPLMPGVLIVEALAQVCGVAMMSVEENKGKLGVFAGIDKVRIKREVRPGDTLTMEVEMTTLRKNIAKADAKAYVGEELVCKGELMFALVEK.

H48 is an active-site residue.

This sequence belongs to the thioester dehydratase family. FabZ subfamily.

The protein localises to the cytoplasm. It catalyses the reaction a (3R)-hydroxyacyl-[ACP] = a (2E)-enoyl-[ACP] + H2O. Involved in unsaturated fatty acids biosynthesis. Catalyzes the dehydration of short chain beta-hydroxyacyl-ACPs and long chain saturated and unsaturated beta-hydroxyacyl-ACPs. This chain is 3-hydroxyacyl-[acyl-carrier-protein] dehydratase FabZ, found in Clostridioides difficile (strain 630) (Peptoclostridium difficile).